Reading from the N-terminus, the 277-residue chain is Myelin proteolipid protein (277 aa).

Residues 2 to 10 (GLLECCARC) are Cytoplasmic-facing. Residues C6, C7, and C10 are each lipidated (S-palmitoyl cysteine). Residues 11–36 (LIGAPFASLVATGLCFFGVALFCGCG) form a helical membrane-spanning segment. The Extracellular portion of the chain corresponds to 37-59 (HEALTGTEQLIETYFSKNYQDYE). The chain crosses the membrane as a helical span at residues 60-88 (YLIDVIHAFQYVIYGTASFFFLYGALLLA). Residues 89–151 (EGFYTTGAVR…LGKWLGHPDK (63 aa)) are Cytoplasmic-facing. S-palmitoyl cysteine attachment occurs at residues C109, C139, and C141. A helical membrane pass occupies residues 152 to 178 (FVGITYVLTIVWLLAFACSAVPVYIYF). The Extracellular segment spans residues 179–238 (NTWTTCQSIAFPTKTTASIGTLCADARMYGVLPWNAFPGKVCGSNLLSICKTSEFQMTFH). Intrachain disulfides connect C184/C228 and C201/C220. A lipid anchor (O-palmitoyl threonine) is attached at T199. The helical transmembrane segment at 239–268 (LFIAAFVGAAATLVSLLTFMIAATYNFAVL) threads the bilayer. At 269–277 (KLMGRGTKF) the chain is on the cytoplasmic side.

This sequence belongs to the myelin proteolipid protein family.

The protein resides in the cell membrane. Functionally, this is the major myelin protein from the central nervous system. It plays an important role in the formation or maintenance of the multilamellar structure of myelin. This Gallus gallus (Chicken) protein is Myelin proteolipid protein (PLP1).